The chain runs to 513 residues: ATP synthase subunit alpha (513 aa).

An ATP-binding site is contributed by 169 to 176 (GDRQTGKT).

Belongs to the ATPase alpha/beta chains family. In terms of assembly, F-type ATPases have 2 components, CF(1) - the catalytic core - and CF(0) - the membrane proton channel. CF(1) has five subunits: alpha(3), beta(3), gamma(1), delta(1), epsilon(1). CF(0) has three main subunits: a(1), b(2) and c(9-12). The alpha and beta chains form an alternating ring which encloses part of the gamma chain. CF(1) is attached to CF(0) by a central stalk formed by the gamma and epsilon chains, while a peripheral stalk is formed by the delta and b chains.

Its subcellular location is the cell inner membrane. The enzyme catalyses ATP + H2O + 4 H(+)(in) = ADP + phosphate + 5 H(+)(out). Its function is as follows. Produces ATP from ADP in the presence of a proton gradient across the membrane. The alpha chain is a regulatory subunit. The sequence is that of ATP synthase subunit alpha from Pectobacterium carotovorum subsp. carotovorum (strain PC1).